A 333-amino-acid polypeptide reads, in one-letter code: Fructose-1,6-bisphosphatase class 1 (333 aa).

The Mg(2+) site is built by E90, D112, L114, and D115. Substrate contacts are provided by residues D115–S118, N207, and K273. Residue E279 participates in Mg(2+) binding.

The protein belongs to the FBPase class 1 family. In terms of assembly, homotetramer. Mg(2+) is required as a cofactor.

The protein resides in the cytoplasm. The catalysed reaction is beta-D-fructose 1,6-bisphosphate + H2O = beta-D-fructose 6-phosphate + phosphate. It participates in carbohydrate biosynthesis; gluconeogenesis. The chain is Fructose-1,6-bisphosphatase class 1 from Azoarcus sp. (strain BH72).